The sequence spans 564 residues: Membrane protein insertase YidC (564 aa).

The helical transmembrane segment at V7–N24 threads the bilayer. The span at K43–D60 shows a compositional bias: low complexity. The segment at K43–D76 is disordered. 6 consecutive transmembrane segments (helical) span residues L293–A313, V341–I361, L364–F384, M438–V458, I483–I503, and P524–V544.

This sequence belongs to the OXA1/ALB3/YidC family. Type 1 subfamily. In terms of assembly, interacts with the Sec translocase complex via SecD. Specifically interacts with transmembrane segments of nascent integral membrane proteins during membrane integration.

Its subcellular location is the cell inner membrane. Its function is as follows. Required for the insertion and/or proper folding and/or complex formation of integral membrane proteins into the membrane. Involved in integration of membrane proteins that insert both dependently and independently of the Sec translocase complex, as well as at least some lipoproteins. Aids folding of multispanning membrane proteins. In Janthinobacterium sp. (strain Marseille) (Minibacterium massiliensis), this protein is Membrane protein insertase YidC.